The following is a 236-amino-acid chain: Uridylate kinase (236 aa).

An ATP-binding site is contributed by 10–13; it reads KLSG. Gly52 contributes to the UMP binding site. Residues Gly53 and Arg57 each contribute to the ATP site. UMP contacts are provided by residues Asp72 and 133-140; that span reads TGNPFFTT. Residues Thr160, Tyr166, and Asp169 each contribute to the ATP site.

Belongs to the UMP kinase family. As to quaternary structure, homohexamer.

Its subcellular location is the cytoplasm. It carries out the reaction UMP + ATP = UDP + ADP. Its pathway is pyrimidine metabolism; CTP biosynthesis via de novo pathway; UDP from UMP (UMPK route): step 1/1. Inhibited by UTP. In terms of biological role, catalyzes the reversible phosphorylation of UMP to UDP. The polypeptide is Uridylate kinase (Bacteroides thetaiotaomicron (strain ATCC 29148 / DSM 2079 / JCM 5827 / CCUG 10774 / NCTC 10582 / VPI-5482 / E50)).